Here is a 142-residue protein sequence, read N- to C-terminus: Large ribosomal subunit protein uL13 (142 aa).

The protein belongs to the universal ribosomal protein uL13 family. In terms of assembly, part of the 50S ribosomal subunit.

This protein is one of the early assembly proteins of the 50S ribosomal subunit, although it is not seen to bind rRNA by itself. It is important during the early stages of 50S assembly. This is Large ribosomal subunit protein uL13 from Shewanella denitrificans (strain OS217 / ATCC BAA-1090 / DSM 15013).